A 199-amino-acid polypeptide reads, in one-letter code: Shikimate kinase (199 aa).

Residue 14 to 19 (GSGKST) participates in ATP binding. Position 18 (Ser18) interacts with Mg(2+). Residues Asp36, Arg60, and Gly82 each contribute to the substrate site. Arg120 contacts ATP. Substrate is bound at residue Arg147. The tract at residues 179 to 199 (YVRRAEKNQNSHSQTKKQSRK) is disordered.

The protein belongs to the shikimate kinase family. In terms of assembly, monomer. Requires Mg(2+) as cofactor.

The protein resides in the cytoplasm. The enzyme catalyses shikimate + ATP = 3-phosphoshikimate + ADP + H(+). It functions in the pathway metabolic intermediate biosynthesis; chorismate biosynthesis; chorismate from D-erythrose 4-phosphate and phosphoenolpyruvate: step 5/7. Catalyzes the specific phosphorylation of the 3-hydroxyl group of shikimic acid using ATP as a cosubstrate. This Chlorobium phaeobacteroides (strain BS1) protein is Shikimate kinase.